Reading from the N-terminus, the 324-residue chain is 1-deoxyxylulose-5-phosphate synthase YajO (324 aa).

Tyr-61 functions as the Proton donor in the catalytic mechanism.

Belongs to the aldo/keto reductase family. Aldo/keto reductase 2 subfamily.

It catalyses the reaction D-ribulose 5-phosphate + AH2 = 1-deoxy-D-xylulose 5-phosphate + A + H2O. With respect to regulation, NADH, NADPH or ATP do not increase activity. Its function is as follows. Catalyzes the conversion of ribulose 5-phosphate (Ru5P) to 1-deoxy-D-xylulose 5-phosphate (DXP), providing a direct route from pentoses to terpenes. May play a role in biosynthesis of DXP under conditions of thiamine starvation. The chain is 1-deoxyxylulose-5-phosphate synthase YajO (yajO) from Escherichia coli (strain K12).